We begin with the raw amino-acid sequence, 482 residues long: FAD-dependent monooxygenase esdpE (482 aa).

The first 21 residues, 1-21, serve as a signal peptide directing secretion; sequence MGAERLKVIIVGGSIAGLTLA. FAD-binding residues include Glu35 and Arg108. A glycan (N-linked (GlcNAc...) asparagine) is linked at Asn243. FAD-binding residues include Asp308 and Ala321. The chain crosses the membrane as a helical span at residues 440–460; that stretch reads LFSGSLLLIMSVALLFGVICW.

This sequence belongs to the paxM FAD-dependent monooxygenase family. FAD serves as cofactor.

It is found in the membrane. The protein operates within secondary metabolite biosynthesis; terpenoid biosynthesis. Its function is as follows. FAD-dependent monooxygenase; part of the cluster that mediates the biosynthesis of shearones, diterpenoid pyrones (DPs) which are structurally diverse meroterpenoids consisting of a diterpene linked by a pyrone, and which may exhibit a range of bioactivities. Within the pathway, esdpE takes part to the biosynthesis of the molecular scaffold by catalyzing the formation of an (S)-epoxide ring at the terminal olefin of the geranylgeranyl group. The molecular scaffold is commonly biosynthesized by a series of enzymes including the non-reducing polyketide synthase (NR-PKS) esdpA that generates an alpha-pyrone; the prenyltransferase esdpC that attaches a geranylgeranyl pyrophosphate (GGPP) produced by the GGPP synthase (GGPPS) esdpD onto the pyrone unit; the FAD-dependent monooxygenase esdpE that converts an olefin on the diterpene unit into an epoxide; and the terpene cyclase esdpB that catalyzes the cyclization reactions to give the molecular backbone shearone A. In the modification steps, esdpF oxidizes the hydroxy group to a ketone at C-3 and esdpG then attaches hydroxy groups at both C-11 and C-12. After that, esdpI hydroxylates at C-20 and esdpH hydroxylates at C-6'. The ether bridge is generated by nucleophilic attack of the hydroxy group at C-20 to the carbonyl carbon at C-3. EsdpH can also functions prior to esdpI. The different combinations of these modification enzymes lead to the production of diverse shearone derivatives, shearone I being the end product of the pathway. The alpha-ketoglutarate-dependent dioxygenase esdpJ seems not to be involved in this pathway. This is FAD-dependent monooxygenase esdpE from Penicillium shearii (Eupenicillium shearii).